A 369-amino-acid chain; its full sequence is Chaperone protein DnaJ (369 aa).

The J domain occupies 7–73 (DYYEILGVPR…QKRAMYDRFG (67 aa)). The segment at 143-225 (GAEIPVEYER…CGGSGRVLRK (83 aa)) adopts a CR-type zinc-finger fold. Residues C156, C159, C173, C176, C199, C202, C213, and C216 each contribute to the Zn(2+) site. CXXCXGXG motif repeat units lie at residues 156–163 (CPRCGGTG), 173–180 (CPSCGGTG), 199–206 (CERCGGTG), and 213–220 (CHECGGSG).

The protein belongs to the DnaJ family. In terms of assembly, homodimer. Zn(2+) is required as a cofactor.

It localises to the cytoplasm. Its function is as follows. Participates actively in the response to hyperosmotic and heat shock by preventing the aggregation of stress-denatured proteins and by disaggregating proteins, also in an autonomous, DnaK-independent fashion. Unfolded proteins bind initially to DnaJ; upon interaction with the DnaJ-bound protein, DnaK hydrolyzes its bound ATP, resulting in the formation of a stable complex. GrpE releases ADP from DnaK; ATP binding to DnaK triggers the release of the substrate protein, thus completing the reaction cycle. Several rounds of ATP-dependent interactions between DnaJ, DnaK and GrpE are required for fully efficient folding. Also involved, together with DnaK and GrpE, in the DNA replication of plasmids through activation of initiation proteins. The protein is Chaperone protein DnaJ of Thermotoga sp. (strain RQ2).